The sequence spans 530 residues: ATP synthase subunit alpha (530 aa).

172 to 179 (GDRQTGKT) provides a ligand contact to ATP.

It belongs to the ATPase alpha/beta chains family. In terms of assembly, F-type ATPases have 2 components, CF(1) - the catalytic core - and CF(0) - the membrane proton channel. CF(1) has five subunits: alpha(3), beta(3), gamma(1), delta(1), epsilon(1). CF(0) has three main subunits: a(1), b(2) and c(9-12). The alpha and beta chains form an alternating ring which encloses part of the gamma chain. CF(1) is attached to CF(0) by a central stalk formed by the gamma and epsilon chains, while a peripheral stalk is formed by the delta and b chains.

The protein localises to the cell inner membrane. The catalysed reaction is ATP + H2O + 4 H(+)(in) = ADP + phosphate + 5 H(+)(out). In terms of biological role, produces ATP from ADP in the presence of a proton gradient across the membrane. The alpha chain is a regulatory subunit. The protein is ATP synthase subunit alpha of Phocaeicola vulgatus (strain ATCC 8482 / DSM 1447 / JCM 5826 / CCUG 4940 / NBRC 14291 / NCTC 11154) (Bacteroides vulgatus).